Reading from the N-terminus, the 584-residue chain is Potassium-transporting ATPase potassium-binding subunit (584 aa).

10 helical membrane passes run 8-28, 65-85, 139-159, 172-192, 262-282, 292-312, 398-418, 440-460, 507-527, and 544-564; these read FLVLIGVILALLLIPTGEFMF, SFAVAMMIFSVIGIVFVFILQ, VQNFMSAAVGMVVLVAFIYGF, VLLLRSIWILLPLSFVIALVL, FTDLVEIVAILLIPVSLCFMF, GIAILIAMMILFVPLLGLGIW, GLYCMLVFVIIAMFIAGLMVG, ILIPIFLILIGTAIAVSITAG, MFVGRYAIAIITLALAGAFVA, and LFIIWVVFTILIIGALSFLPA.

This sequence belongs to the KdpA family. As to quaternary structure, the system is composed of three essential subunits: KdpA, KdpB and KdpC.

Its subcellular location is the cell membrane. In terms of biological role, part of the high-affinity ATP-driven potassium transport (or Kdp) system, which catalyzes the hydrolysis of ATP coupled with the electrogenic transport of potassium into the cytoplasm. This subunit binds the extracellular potassium ions and delivers the ions to the membrane domain of KdpB through an intramembrane tunnel. This chain is Potassium-transporting ATPase potassium-binding subunit, found in Methanoregula boonei (strain DSM 21154 / JCM 14090 / 6A8).